Here is an 81-residue protein sequence, read N- to C-terminus: Putative membrane protein insertion efficiency factor (81 aa).

Positions 59-81 (PWNPGGYDPVPPIKTSRSSSMAE) are disordered.

The protein belongs to the UPF0161 family.

Its subcellular location is the cell inner membrane. Its function is as follows. Could be involved in insertion of integral membrane proteins into the membrane. The sequence is that of Putative membrane protein insertion efficiency factor from Azotobacter vinelandii (strain DJ / ATCC BAA-1303).